Consider the following 269-residue polypeptide: WW domain-binding protein 1 (269 aa).

2 consecutive short sequence motifs (PPxY motif) follow at residues 124–127 and 137–141; these read PPAY and PPPPY. Disordered regions lie at residues 169–203 and 249–269; these read EGTN…PPSC and PPES…GDIP. Positions 174-183 are enriched in polar residues; that stretch reads EGVSSHQSAP.

Interacts with NEDD4. Binds to the WW domain of YAP1, WWP1 and WWP2. Interacts with WWOX. Expressed in most tissues but at significantly lower levels in placenta, lung, liver, and kidney.

This chain is WW domain-binding protein 1 (WBP1), found in Homo sapiens (Human).